Reading from the N-terminus, the 506-residue chain is Acyl-CoA-binding domain-containing protein 5 (506 aa).

The region spanning 44–133 (YETRFEAAVK…MKKIIETMPM (90 aa)) is the ACB domain. An acyl-CoA contacts are provided by residues 55 to 64 (IQSLPKNGSF), 75 to 79 (YSFYK), lysine 101, and tyrosine 120. Positions 175 to 217 (AKAVNGKAESSDSGAESEEEEAQEELKGAEQSGSDDKKMMTKS) are disordered. A coiled-coil region spans residues 181–209 (KAESSDSGAESEEEEAQEELKGAEQSGSD). Serine 184, serine 185, serine 187, serine 191, serine 206, and serine 233 each carry phosphoserine. The segment covering 198–217 (EELKGAEQSGSDDKKMMTKS) has biased composition (basic and acidic residues). 2 disordered regions span residues 234-302 (FAQD…CDSM) and 345-417 (AVKG…RGSR). Residues 238 to 257 (SDIHTDSSRSARRSEDKKPT) are compositionally biased toward basic and acidic residues. The span at 258–267 (DQSSQQTGNT) shows a compositional bias: polar residues. A Phosphoserine modification is found at serine 301. Residues 348–360 (GKGEVKHGGEDGR) are compositionally biased toward basic and acidic residues. Serine 403 is modified (phosphoserine). Over residues 406-416 (DGERWGSDRGS) the composition is skewed to basic and acidic residues. Positions 426–451 (LVLIRLQEDMQNVLQRLHKLETLTAS) form a coiled coil. Lysine 444 carries the N6-acetyllysine modification. Residues 478 to 498 (GALAFAIIWPFIAQWLVHLYY) form a helical membrane-spanning segment.

The protein belongs to the ATG37 family.

The protein localises to the peroxisome membrane. Its function is as follows. Acyl-CoA binding protein which acts as the peroxisome receptor for pexophagy but is dispensable for aggrephagy and nonselective autophagy. Binds medium- and long-chain acyl-CoA esters. In Rattus norvegicus (Rat), this protein is Acyl-CoA-binding domain-containing protein 5 (Acbd5).